Consider the following 90-residue polypeptide: Electron transfer flavoprotein regulatory factor 1 (90 aa).

Belongs to the complex I LYR family. As to quaternary structure, homotetramer. Interacts with NDUFAB1. Interacts with ETFA. Interacts with ETFB.

Its subcellular location is the mitochondrion. Acts as a regulator of the electron transfer flavoprotein by promoting the removal of flavin from the ETF holoenzyme (composed of ETFA and ETFB). The polypeptide is Electron transfer flavoprotein regulatory factor 1 (Homo sapiens (Human)).